The primary structure comprises 662 residues: Transketolase (662 aa).

Histidine 28 is a binding site for substrate. Residues histidine 68 and 115-117 (GPL) each bind thiamine diphosphate. Position 156 (aspartate 156) interacts with Mg(2+). Thiamine diphosphate is bound by residues glycine 157 and asparagine 186. The Mg(2+) site is built by asparagine 186 and isoleucine 188. Histidine 261, arginine 356, and serine 383 together coordinate substrate. Histidine 261 serves as a coordination point for thiamine diphosphate. Glutamate 410 serves as the catalytic Proton donor. Phenylalanine 436 is a binding site for thiamine diphosphate. Residues histidine 460, aspartate 468, and arginine 519 each contribute to the substrate site.

It belongs to the transketolase family. In terms of assembly, homodimer. The cofactor is Mg(2+). Ca(2+) is required as a cofactor. Mn(2+) serves as cofactor. Requires Co(2+) as cofactor. It depends on thiamine diphosphate as a cofactor.

The catalysed reaction is D-sedoheptulose 7-phosphate + D-glyceraldehyde 3-phosphate = aldehydo-D-ribose 5-phosphate + D-xylulose 5-phosphate. Its pathway is carbohydrate biosynthesis; Calvin cycle. The protein operates within carbohydrate degradation; pentose phosphate pathway. Catalyzes the transfer of a two-carbon ketol group from a ketose donor to an aldose acceptor, via a covalent intermediate with the cofactor thiamine pyrophosphate. The polypeptide is Transketolase (tkt) (Staphylococcus aureus (strain MRSA252)).